Reading from the N-terminus, the 937-residue chain is von Willebrand factor (937 aa).

Residues 1–22 form the signal peptide; it reads MFPTRLARLLLAVALTLPGALC. A propeptide spanning residues 23–762 is cleaved from the precursor; sequence GEGALGKSSM…SSPLSHRSKR (740 aa). Residues 33-201 form the VWFD 1 domain; it reads ARCSLFGADF…ALSSEEQRCP (169 aa). 2 disulfide bridges follow: cysteine 35–cysteine 162 and cysteine 57–cysteine 200. 3 N-linked (GlcNAc...) asparagine glycosylation sites follow: asparagine 99, asparagine 156, and asparagine 211. In terms of domain architecture, TIL 1 spans 294–347; sequence CPTGMEYKECVSPCHRTCRSLSITEVCREQCVDGCSCPEGQLLDEGRCVESTEC. Residues 385 to 559 enclose the VWFD 2 domain; it reads GECLITGQSH…NSWKLRADCE (175 aa). 3 cysteine pairs are disulfide-bonded: cysteine 387/cysteine 523, cysteine 409/cysteine 558, and cysteine 431/cysteine 439. Residues 651–706 enclose the TIL 2 domain; the sequence is CPHGQVYQQCGTPCNLTCRSLSHPDEECTEVCLEGCFCPPGLFLDETGSCVPKAQC. Asparagine 665 is a glycosylation site (N-linked (GlcNAc...) asparagine). The interval 763–786 is amino-terminal; that stretch reads SLSCRPPMVKVVCPADNPRAEGLE. Disulfide bonds link cysteine 766–cysteine 807 and cysteine 775–cysteine 803. An E1 region spans residues 787–832; that stretch reads CTKTCQNYDLECMSTGCVSGCLPAPGMVRHENRCVALERCPCFHQG. The segment at 825-852 is CX; the sequence is RCPCFHQGREYAPGDRVKVDCNSCVCQD. Asparagine 856 is a glycosylation site (N-linked (GlcNAc...) asparagine). The 74-residue stretch at 864–937 folds into the VWFD 3 domain; it reads ASCSALGLAH…VEGGEIELFD (74 aa). Residues cysteine 913 and cysteine 920 are joined by a disulfide bond.

In terms of assembly, multimeric. Interacts with F8. In terms of processing, all cysteine residues are involved in intrachain or interchain disulfide bonds. N- and O-glycosylated. Plasma.

It is found in the secreted. The protein resides in the extracellular space. Its subcellular location is the extracellular matrix. Functionally, important in the maintenance of hemostasis, it promotes adhesion of platelets to the sites of vascular injury by forming a molecular bridge between sub-endothelial collagen matrix and platelet-surface receptor complex GPIb-IX-V. Also acts as a chaperone for coagulation factor VIII, delivering it to the site of injury, stabilizing its heterodimeric structure and protecting it from premature clearance from plasma. The protein is von Willebrand factor (VWF) of Bos taurus (Bovine).